We begin with the raw amino-acid sequence, 1551 residues long: UDP-glucose:glycoprotein glucosyltransferase 1 (1551 aa).

The N-terminal stretch at 1–42 (MCSRGDANTADAAAARRVTGLRYNMRLLIALALPCLFSLAEA) is a signal peptide. N-linked (GlcNAc...) asparagine glycans are attached at residues asparagine 269, asparagine 536, and asparagine 1228. The segment at 1244-1551 (KAEEVKQDKD…QEGSQKHEEL (308 aa)) is glucosyltransferase. Serine 1277 carries the phosphoserine modification. The tract at residues 1531–1551 (KELGTLHTEETQEGSQKHEEL) is disordered. Positions 1548-1551 (HEEL) match the Prevents secretion from ER motif.

This sequence belongs to the glycosyltransferase 8 family. In terms of assembly, monomer as well as in a tight complex with SELENOF. Interacts with METTL23. Part of a large chaperone multiprotein complex comprising DNAJB11, HSP90B1, HSPA5, HYOU, PDIA2, PDIA4, PDIA6, PPIB, SDF2L1, UGGT1 and very small amounts of ERP29, but not, or at very low levels, CALR nor CANX. It depends on Ca(2+) as a cofactor. Requires Mn(2+) as cofactor.

It is found in the endoplasmic reticulum lumen. The protein localises to the endoplasmic reticulum-Golgi intermediate compartment. It carries out the reaction N(4)-(alpha-D-Man-(1-&gt;2)-alpha-D-Man-(1-&gt;2)-alpha-D-Man-(1-&gt;3)-[alpha-D-Man-(1-&gt;2)-alpha-D-Man-(1-&gt;3)-[alpha-D-Man-(1-&gt;2)-alpha-D-Man-(1-&gt;6)]-alpha-D-Man-(1-&gt;6)]-beta-D-Man-(1-&gt;4)-beta-D-GlcNAc-(1-&gt;4)-beta-D-GlcNAc)-L-asparaginyl-[protein] (N-glucan mannose isomer 9A1,2,3B1,2,3) + UDP-alpha-D-glucose = N(4)-(alpha-D-Glc-(1-&gt;3)-alpha-D-Man-(1-&gt;2)-alpha-D-Man-(1-&gt;2)-alpha-D-Man-(1-&gt;3)-[alpha-D-Man-(1-&gt;2)-alpha-D-Man-(1-&gt;3)-[alpha-D-Man-(1-&gt;2)-alpha-D-Man-(1-&gt;6)]-alpha-D-Man-(1-&gt;6)]-beta-D-Man-(1-&gt;4)-beta-D-GlcNAc-(1-&gt;4)-beta-D-GlcNAc)-L-asparaginyl-[protein] + UDP + H(+). The protein operates within protein modification; protein glycosylation. Functionally, recognizes glycoproteins with minor folding defects. Reglucosylates single N-glycans near the misfolded part of the protein, thus providing quality control for protein folding in the endoplasmic reticulum. Reglucosylated proteins are recognized by calreticulin for recycling to the endoplasmic reticulum and refolding or degradation. In Mus musculus (Mouse), this protein is UDP-glucose:glycoprotein glucosyltransferase 1 (Uggt1).